Reading from the N-terminus, the 1428-residue chain is uncharacterized protein (1428 aa).

Disordered regions lie at residues 1–53, 249–274, and 377–413; these read MAKK…AFKV, DIKH…KDSK, and KNGI…ETRA. Positions 16–33 are enriched in polar residues; the sequence is ATTSIPSRSASSPANKNQ. A compositionally biased stretch (basic and acidic residues) spans 34–51; the sequence is VKGEKNNKTQKVEPKNAF. Polar residues predominate over residues 256–265; sequence KETQPSNQVD. A Helicase ATP-binding domain is found at 641–811; sequence IDAVNNSQLL…FEGSNLITIP (171 aa). 654 to 661 lines the ATP pocket; the sequence is GDTGCGKS. A DEAH box motif is present at residues 758 to 761; the sequence is DEVH. Positions 886–1064 constitute a Helicase C-terminal domain; that stretch reads LIVYLLKYIF…EVVLRVKMCQ (179 aa).

Belongs to the helicase family. SKI2 subfamily.

The protein resides in the cytoplasm. This is an uncharacterized protein from Schizosaccharomyces pombe (strain 972 / ATCC 24843) (Fission yeast).